Here is a 414-residue protein sequence, read N- to C-terminus: MIVRIYPSEISGTIKAPQSKSLAIRLIFLSLFTRIHLHNLVLSEDVIDAINSVRALGVEVKNNSEFIPPEKLEIKKKFIKLKGSGTTLRMLIPIVAAIGGEVTIDAEESLRRRPLKRIVEALSNYGISFSSSSLPLTITGKLSSYNIKISGDESSQYISGLIYALHILNGGSIEILPPISSKSYILLTVDLFNRFGSNVKFYGNKIHINPNNLVEFQGEVAGDYGLASFYALSALLSGGRTTIVNLWEPKEYFGDHSIVKILKEMGATSEYLDGKWYVEAKDKYSSIKVNIDDAPDLAMTIAGLAAIAEGTSEITGIERLRIKESDRIESIRKVLGLYGVGSEVKSNSILIFGINKRMLSSPITDCLNDHRVAMMSSALALVNGGVITSAECVSKSNPNYWQDLLSLNAKISIE.

3 residues coordinate 3-phosphoshikimate: K20, S21, and R25. Phosphoenolpyruvate is bound at residue K20. Phosphoenolpyruvate contacts are provided by G85 and R113. 3-phosphoshikimate is bound by residues S154, S155, Q156, S181, D296, and K323. Q156 contacts phosphoenolpyruvate. The active-site Proton acceptor is the D296. Residues R327, R371, and K395 each coordinate phosphoenolpyruvate.

It belongs to the EPSP synthase family. Monomer.

The protein localises to the cytoplasm. The catalysed reaction is 3-phosphoshikimate + phosphoenolpyruvate = 5-O-(1-carboxyvinyl)-3-phosphoshikimate + phosphate. Its pathway is metabolic intermediate biosynthesis; chorismate biosynthesis. Catalyzes the transfer of the enolpyruvyl moiety of phosphoenolpyruvate (PEP) to the 5-hydroxyl of shikimate-3-phosphate (S3P) to produce enolpyruvyl shikimate-3-phosphate and inorganic phosphate. In Saccharolobus islandicus (strain M.14.25 / Kamchatka #1) (Sulfolobus islandicus), this protein is 3-phosphoshikimate 1-carboxyvinyltransferase.